We begin with the raw amino-acid sequence, 428 residues long: Immunoglobulin superfamily member 11 (428 aa).

Positions 1 to 22 are cleaved as a signal peptide; sequence MTRRRSAPASWLLVSLLGVATS. The Ig-like V-type domain occupies 23 to 136; it reads LEVSESPGSV…DRGGRNIGVT (114 aa). Residues 23-240 are Extracellular-facing; sequence LEVSESPGSV…QVISPQPRSV (218 aa). 2 disulfide bridges follow: Cys44/Cys120 and Cys165/Cys215. N-linked (GlcNAc...) asparagine glycosylation is present at Asn102. An Ig-like C2-type domain is found at 144–234; the sequence is PSAPQCQIQG…TCLLDLQVIS (91 aa). The helical transmembrane segment at 241–261 threads the bilayer; it reads GVIAGAVGTGAVLIVICLALI. Over 262–428 the chain is Cytoplasmic; the sequence is SGAFFYWRSK…PAQSRAGSLV (167 aa). Arg375 carries the post-translational modification Omega-N-methylarginine. The span at 376–389 shows a compositional bias: polar residues; the sequence is GSSPQVLPRNNGSV. The disordered stretch occupies residues 376–396; that stretch reads GSSPQVLPRNNGSVSRKPWPQ.

N-glycosylated. As to expression, highly expressed in testis and detected in kidney and adrenal gland. In brain, expressed in commissure fibers of the corpus callosum and pyramidal cell layers of the dentate gyrus and hippocampus where it is probably expressed by both neurons and glial cells.

It is found in the cell membrane. Its function is as follows. Functions as a cell adhesion molecule through homophilic interaction. Stimulates cell growth. The sequence is that of Immunoglobulin superfamily member 11 (Igsf11) from Mus musculus (Mouse).